Here is a 600-residue protein sequence, read N- to C-terminus: Arginine--tRNA ligase (600 aa).

Positions 132 to 142 (ANPTGPLHVGH) match the 'HIGH' region motif.

It belongs to the class-I aminoacyl-tRNA synthetase family. As to quaternary structure, monomer.

The protein localises to the cytoplasm. The catalysed reaction is tRNA(Arg) + L-arginine + ATP = L-arginyl-tRNA(Arg) + AMP + diphosphate. The protein is Arginine--tRNA ligase of Ralstonia nicotianae (strain ATCC BAA-1114 / GMI1000) (Ralstonia solanacearum).